The sequence spans 77 residues: Acyl carrier protein (77 aa).

One can recognise a Carrier domain in the interval 2–77 (SNIEERVRNI…SAIDYVVNNG (76 aa)). Residue serine 37 is modified to O-(pantetheine 4'-phosphoryl)serine.

It belongs to the acyl carrier protein (ACP) family. Post-translationally, 4'-phosphopantetheine is transferred from CoA to a specific serine of apo-ACP by AcpS. This modification is essential for activity because fatty acids are bound in thioester linkage to the sulfhydryl of the prosthetic group.

The protein resides in the cytoplasm. It participates in lipid metabolism; fatty acid biosynthesis. Functionally, carrier of the growing fatty acid chain in fatty acid biosynthesis. This is Acyl carrier protein from Psychromonas ingrahamii (strain DSM 17664 / CCUG 51855 / 37).